The primary structure comprises 470 residues: tRNA-2-methylthio-N(6)-dimethylallyladenosine synthase (470 aa).

The MTTase N-terminal domain maps to 5–122 (RKLYVKSFGC…LPELLAEAKA (118 aa)). Positions 14, 50, 85, 163, 167, and 170 each coordinate [4Fe-4S] cluster. A Radical SAM core domain is found at 149–383 (RSRGPAAFVT…LLEASKAAFD (235 aa)). The region spanning 384–446 (ESCRGRTFDI…PNSLAGVPAE (63 aa)) is the TRAM domain. The disordered stretch occupies residues 439–470 (SLAGVPAEASEPSVSQSPVSSARSRPLAAMEA). Positions 444–464 (PAEASEPSVSQSPVSSARSRP) are enriched in low complexity.

This sequence belongs to the methylthiotransferase family. MiaB subfamily. As to quaternary structure, monomer. The cofactor is [4Fe-4S] cluster.

The protein localises to the cytoplasm. It carries out the reaction N(6)-dimethylallyladenosine(37) in tRNA + (sulfur carrier)-SH + AH2 + 2 S-adenosyl-L-methionine = 2-methylsulfanyl-N(6)-dimethylallyladenosine(37) in tRNA + (sulfur carrier)-H + 5'-deoxyadenosine + L-methionine + A + S-adenosyl-L-homocysteine + 2 H(+). In terms of biological role, catalyzes the methylthiolation of N6-(dimethylallyl)adenosine (i(6)A), leading to the formation of 2-methylthio-N6-(dimethylallyl)adenosine (ms(2)i(6)A) at position 37 in tRNAs that read codons beginning with uridine. The protein is tRNA-2-methylthio-N(6)-dimethylallyladenosine synthase of Xanthobacter autotrophicus (strain ATCC BAA-1158 / Py2).